We begin with the raw amino-acid sequence, 291 residues long: N-acetylmannosamine kinase (291 aa).

ATP contacts are provided by residues 5–12 (AIDIGGTK) and 132–139 (GVGGGVVS). Zn(2+) is bound by residues histidine 156, cysteine 166, cysteine 168, and cysteine 173.

It belongs to the ROK (NagC/XylR) family. NanK subfamily. Homodimer.

It carries out the reaction an N-acyl-D-mannosamine + ATP = an N-acyl-D-mannosamine 6-phosphate + ADP + H(+). Its pathway is amino-sugar metabolism; N-acetylneuraminate degradation; D-fructose 6-phosphate from N-acetylneuraminate: step 2/5. Its function is as follows. Catalyzes the phosphorylation of N-acetylmannosamine (ManNAc) to ManNAc-6-P. The sequence is that of N-acetylmannosamine kinase from Escherichia coli O6:K15:H31 (strain 536 / UPEC).